The following is a 383-amino-acid chain: Cytochrome b (383 aa).

Helical transmembrane passes span Phe-32–Met-52, Trp-76–Ala-98, Thr-113–Val-133, and Phe-179–Ile-199. 2 residues coordinate heme b: His-82 and His-96. Heme b contacts are provided by His-183 and His-197. An a ubiquinone-binding site is contributed by His-202. The next 4 membrane-spanning stretches (helical) occupy residues Phe-225–Cys-245, Leu-289–Asp-309, Leu-321–Ala-341, and Tyr-348–Pro-368.

It belongs to the cytochrome b family. In terms of assembly, fungal cytochrome b-c1 complex contains 10 subunits; 3 respiratory subunits, 2 core proteins and 5 low-molecular weight proteins. Cytochrome b-c1 complex is a homodimer. Heme b is required as a cofactor.

It is found in the mitochondrion inner membrane. Its function is as follows. Component of the ubiquinol-cytochrome c reductase complex (complex III or cytochrome b-c1 complex) that is part of the mitochondrial respiratory chain. The b-c1 complex mediates electron transfer from ubiquinol to cytochrome c. Contributes to the generation of a proton gradient across the mitochondrial membrane that is then used for ATP synthesis. This is Cytochrome b (cob) from Schizophyllum commune (Split gill fungus).